We begin with the raw amino-acid sequence, 216 residues long: Cytochrome c biogenesis ATP-binding export protein CcmA (216 aa).

The 212-residue stretch at 5-216 folds into the ABC transporter domain; sequence ISVDTLLSAS…RKIRLDYRFV (212 aa). Residue 43 to 50 participates in ATP binding; it reads GPNGAGKT.

It belongs to the ABC transporter superfamily. CcmA exporter (TC 3.A.1.107) family. As to quaternary structure, the complex is composed of two ATP-binding proteins (CcmA) and two transmembrane proteins (CcmB).

The protein resides in the cell inner membrane. The enzyme catalyses heme b(in) + ATP + H2O = heme b(out) + ADP + phosphate + H(+). Its function is as follows. Part of the ABC transporter complex CcmAB involved in the biogenesis of c-type cytochromes; once thought to export heme, this seems not to be the case, but its exact role is uncertain. Responsible for energy coupling to the transport system. The polypeptide is Cytochrome c biogenesis ATP-binding export protein CcmA (Shewanella oneidensis (strain ATCC 700550 / JCM 31522 / CIP 106686 / LMG 19005 / NCIMB 14063 / MR-1)).